A 314-amino-acid chain; its full sequence is Hydroxyacyl-coenzyme A dehydrogenase, mitochondrial (314 aa).

A mitochondrion-targeting transit peptide spans 1 to 12 (MAFATRQLVRSL). NAD(+) contacts are provided by residues 34-39 (GGGLMG) and aspartate 57. CoA contacts are provided by serine 73 and lysine 80. The residue at position 80 (lysine 80) is an N6-succinyllysine. Residues lysine 81 and lysine 87 each carry the N6-acetyllysine; alternate modification. An N6-succinyllysine; alternate mark is found at lysine 81 and lysine 87. Residue glutamate 122 participates in NAD(+) binding. Lysine 125 is modified (N6-acetyllysine). Residue lysine 127 participates in NAD(+) binding. N6-(2-hydroxyisobutyryl)lysine is present on lysine 127. Lysine 136 carries the post-translational modification N6-acetyllysine; alternate. Lysine 136 carries the post-translational modification N6-succinyllysine; alternate. NAD(+) is bound by residues serine 149 and asparagine 173. Serine 149 serves as a coordination point for CoA. N6-acetyllysine is present on lysine 179. N6-acetyllysine; alternate occurs at positions 185, 192, and 202. Lysine 185, lysine 192, and lysine 202 each carry N6-succinyllysine; alternate. Lysine 206 carries the N6-succinyllysine modification. N6-acetyllysine; alternate is present on residues lysine 212 and lysine 241. Lysine 212 and lysine 241 each carry N6-succinyllysine; alternate. Position 305 (lysine 305) interacts with NAD(+). Lysine 312 carries the N6-acetyllysine; alternate modification. An N6-succinyllysine; alternate modification is found at lysine 312.

It belongs to the 3-hydroxyacyl-CoA dehydrogenase family. In terms of assembly, homodimer. Interacts with GLUD1; this interaction inhibits the activation of glutamate dehydrogenase 1 (GLUD1). Succinylation at Lys-81, adjacent to a coenzyme A binding site. Desuccinylated by SIRT5.

It is found in the mitochondrion matrix. The catalysed reaction is a (3S)-3-hydroxyacyl-CoA + NAD(+) = a 3-oxoacyl-CoA + NADH + H(+). It carries out the reaction (3S)-3-hydroxybutanoyl-CoA + NAD(+) = acetoacetyl-CoA + NADH + H(+). The enzyme catalyses (3S)-hydroxydecanoyl-CoA + NAD(+) = 3-oxodecanoyl-CoA + NADH + H(+). It catalyses the reaction (3S)-hydroxyhexadecanoyl-CoA + NAD(+) = 3-oxohexadecanoyl-CoA + NADH + H(+). Its pathway is lipid metabolism; fatty acid beta-oxidation. Functionally, mitochondrial fatty acid beta-oxidation enzyme that catalyzes the third step of the beta-oxidation cycle for medium and short-chain 3-hydroxy fatty acyl-CoAs (C4 to C10). Plays a role in the control of insulin secretion by inhibiting the activation of glutamate dehydrogenase 1 (GLUD1), an enzyme that has an important role in regulating amino acid-induced insulin secretion. Plays a role in the maintenance of normal spermatogenesis through the reduction of fatty acid accumulation in the testes. The protein is Hydroxyacyl-coenzyme A dehydrogenase, mitochondrial (HADH) of Sus scrofa (Pig).